The primary structure comprises 278 residues: Small ribosomal subunit protein uS3 (278 aa).

A KH type-2 domain is found at 38–106 (IRKLLSKGME…QVQLNILEVK (69 aa)). Residues 213–278 (RQAQAAARAG…APAPAENQEG (66 aa)) are disordered. The segment covering 214-223 (QAQAAARAGV) has biased composition (low complexity). The segment covering 232–253 (RGGERPSRGSRGDRPTRADRGG) has biased composition (basic and acidic residues). Over residues 259 to 278 (EATGAATEQAAPAPAENQEG) the composition is skewed to low complexity.

This sequence belongs to the universal ribosomal protein uS3 family. As to quaternary structure, part of the 30S ribosomal subunit. Forms a tight complex with proteins S10 and S14.

Functionally, binds the lower part of the 30S subunit head. Binds mRNA in the 70S ribosome, positioning it for translation. The sequence is that of Small ribosomal subunit protein uS3 from Nocardioides sp. (strain ATCC BAA-499 / JS614).